The primary structure comprises 352 residues: Quinolinate synthase (352 aa).

2 residues coordinate iminosuccinate: His-48 and Ser-69. [4Fe-4S] cluster is bound at residue Cys-114. Iminosuccinate-binding positions include 140-142 and Ser-157; that span reads YAN. Position 201 (Cys-201) interacts with [4Fe-4S] cluster. Iminosuccinate is bound by residues 227–229 and Thr-244; that span reads HPE. Cys-298 contributes to the [4Fe-4S] cluster binding site.

This sequence belongs to the quinolinate synthase family. Type 1 subfamily. [4Fe-4S] cluster serves as cofactor.

The protein resides in the cytoplasm. The enzyme catalyses iminosuccinate + dihydroxyacetone phosphate = quinolinate + phosphate + 2 H2O + H(+). It participates in cofactor biosynthesis; NAD(+) biosynthesis; quinolinate from iminoaspartate: step 1/1. Catalyzes the condensation of iminoaspartate with dihydroxyacetone phosphate to form quinolinate. The sequence is that of Quinolinate synthase from Ectopseudomonas mendocina (strain ymp) (Pseudomonas mendocina).